The sequence spans 174 residues: Guided entry of tail-anchored proteins factor 1 (174 aa).

The Lumenal portion of the chain corresponds to 1–8 (MSSAAADH). The chain crosses the membrane as a helical span at residues 9 to 29 (WAWLLVLSFVFGCNVLRILLP). The Cytoplasmic portion of the chain corresponds to 30-99 (SFSSFMSRVL…VKARTAQLAK (70 aa)). A coiled-coil region spans residues 39–94 (LQKDAEQESQMRAEIQDMKQELSTVNMMDEFARYARLERKINKMTDKLKTHVKART). Positions 39-97 (LQKDAEQESQMRAEIQDMKQELSTVNMMDEFARYARLERKINKMTDKLKTHVKARTAQL) are interaction with GET3/TRC40. Residues 100–120 (IKWVISVAFYVLQAALMISLI) form a helical membrane-spanning segment. Residues 121-148 (WKYYSVPVAVVPSKWITPLDRLVAFPTR) are Lumenal-facing. The helical transmembrane segment at 149–169 (VAGGVGITCWILVCNKVVAIV) threads the bilayer. The Cytoplasmic segment spans residues 170-174 (LHPFS).

It belongs to the WRB/GET1 family. As to quaternary structure, component of the Golgi to ER traffic (GET) complex, which is composed of GET1/WRB, CAMLG/GET2 and GET3/TRC40. Within the complex, GET1 and CAMLG form a heterotetramer which is stabilized by phosphatidylinositol binding and which binds to the GET3 homodimer. Interacts with CAMLG (via C-terminus). GET3 shows a higher affinity for CAMLG than for GET1.

Its subcellular location is the endoplasmic reticulum membrane. Its function is as follows. Required for the post-translational delivery of tail-anchored (TA) proteins to the endoplasmic reticulum (ER). Together with CAMLG/GET2, acts as a membrane receptor for soluble GET3/TRC40, which recognizes and selectively binds the transmembrane domain of TA proteins in the cytosol. Required to ensure correct topology and ER insertion of CAMLG. In Homo sapiens (Human), this protein is Guided entry of tail-anchored proteins factor 1.